The chain runs to 230 residues: Germin-like protein 5-1 (230 aa).

The signal sequence occupies residues 1–20; that stretch reads MAMVGRSLLLLLLLVTLAAG. Cys-38 and Cys-53 are disulfide-bonded. In terms of domain architecture, Cupin type-1 spans 86-219; the sequence is YGFTARSVDI…TLLTDEATVD (134 aa). Mn(2+) contacts are provided by His-119, His-121, Glu-126, and His-167. The N-linked (GlcNAc...) asparagine glycan is linked to Asn-172.

It belongs to the germin family. In terms of assembly, oligomer (believed to be a pentamer but probably hexamer).

It localises to the secreted. It is found in the extracellular space. Its subcellular location is the apoplast. In terms of biological role, may play a role in plant defense. Probably has no oxalate oxidase activity even if the active site is conserved. In Oryza sativa subsp. japonica (Rice), this protein is Germin-like protein 5-1.